The following is a 296-amino-acid chain: Iron(3+)-hydroxamate-binding protein FhuD (296 aa).

Residues 1–30 constitute a signal peptide (tat-type signal); the sequence is MSGLPLISRRRLLTAMALSPLLWQMNTAHA. The 260-residue stretch at 37–296 folds into the Fe/B12 periplasmic-binding domain; sequence RIVALEWLPV…VLDNAIGGKA (260 aa). Positions 68, 84, 103, 106, 124, 217, 273, 274, and 275 each coordinate Fe(III)-coprogen.

Belongs to the bacterial solute-binding protein 8 family. In terms of assembly, the complex is composed of two ATP-binding proteins (FhuC), a transmembrane protein (FhuB) and a solute-binding protein (FhuD). FhuD interacts with FhuB. Substrate-loaded FhuD binds FhuB more strongly than FhuD alone. In terms of processing, exported by the Tat system. The position of the signal peptide cleavage has been experimentally proven. Can also be exported by the Sec system.

It is found in the periplasm. Functionally, part of the ABC transporter complex FhuCDB involved in iron(3+)-hydroxamate import. Binds the iron(3+)-hydroxamate complex and transfers it to the membrane-bound permease. Required for the transport of all iron(3+)-hydroxamate siderophores such as ferrichrome, gallichrome, desferrioxamine, coprogen, aerobactin, shizokinen, rhodotorulic acid and the antibiotic albomycin. This Escherichia coli (strain K12) protein is Iron(3+)-hydroxamate-binding protein FhuD (fhuD).